Reading from the N-terminus, the 462-residue chain is Metal cation symporter ZIP8 (462 aa).

An N-terminal signal peptide occupies residues 1 to 19 (MAPGRAVAGLLLLAATGLG). The Extracellular portion of the chain corresponds to 20–132 (RPSEGPELAF…PSFSEVWGYG (113 aa)). 3 N-linked (GlcNAc...) asparagine glycosylation sites follow: N40, N88, and N96. Residues 133-153 (FLSVTIINLASLLGLILTPLI) form a helical membrane-spanning segment. Over 154–160 (KKSYFPK) the chain is Cytoplasmic. A helical transmembrane segment spans residues 161–181 (ILTYFVGLAIGTLFSNAIFQL). At 182-191 (IPEAFGFNPK) the chain is on the extracellular side. A helical membrane pass occupies residues 192–212 (IDNYVEKAVAVFGGFYMLFFV). Residues 213–367 (ERTLKMLLKT…LNAGMSTRQA (155 aa)) lie on the Cytoplasmic side of the membrane. The short motif at 345–350 (EEFPHE) is the XEXPHE-motif element. Residues 368-388 (LLFNFLSACSCYVGLAFGILV) traverse the membrane as a helical segment. At 389–390 (GN) the chain is on the extracellular side. A helical membrane pass occupies residues 391 to 411 (NFAPNIIFALAGGMFLYISLA). Residues 412 to 431 (DMFPEMNDMLREKVTGRQTD) are Cytoplasmic-facing. A helical transmembrane segment spans residues 432–452 (FTFFMIQNAGMLTGFTAILLI). The Extracellular portion of the chain corresponds to 453 to 462 (TLYAGDIELQ).

This sequence belongs to the ZIP transporter (TC 2.A.5) family. In terms of assembly, homodimer. Post-translationally, N-glycosylated. N-glycosylation is not required for proper iron and zinc transport.

The protein localises to the cell membrane. It localises to the lysosome membrane. It is found in the apical cell membrane. The protein resides in the basolateral cell membrane. The enzyme catalyses Zn(2+)(out) + 2 hydrogencarbonate(out) = Zn(2+)(in) + 2 hydrogencarbonate(in). The catalysed reaction is selenite(out) + Zn(2+)(out) + hydrogencarbonate(out) = selenite(in) + Zn(2+)(in) + hydrogencarbonate(in). It catalyses the reaction Mn(2+)(out) + 2 hydrogencarbonate(out) = Mn(2+)(in) + 2 hydrogencarbonate(in). It carries out the reaction Fe(2+)(out) + 2 hydrogencarbonate(out) = Fe(2+)(in) + 2 hydrogencarbonate(in). The enzyme catalyses Cd(2+)(out) + 2 hydrogencarbonate(out) = Cd(2+)(in) + 2 hydrogencarbonate(in). The catalysed reaction is Co(2+)(out) + 2 hydrogencarbonate(out) = Co(2+)(in) + 2 hydrogencarbonate(in). Its function is as follows. Electroneutral divalent metal cation:bicarbonate symporter of the plasma membrane mediating the cellular uptake of zinc and manganese, two divalent metal cations important for development, tissue homeostasis and immunity. Transports an electroneutral complex composed of a divalent metal cation and two bicarbonate anions or alternatively a bicarbonate and a selenite anion. Thereby, it also contributes to the cellular uptake of selenium, an essential trace metal and micronutrient. Also imports cadmium a non-essential metal which is cytotoxic and carcinogenic. May also transport iron and cobalt through membranes. Through zinc import, indirectly regulates the metal-dependent transcription factor MTF1 and the expression of some metalloproteases involved in cartilage catabolism and also probably heart development. Also indirectly regulates the expression of proteins involved in cell morphology and cytoskeleton organization. Indirectly controls innate immune function and inflammatory response by regulating zinc cellular uptake which in turn modulates the expression of genes specific of these processes. Protects, for instance, cells from injury and death at the onset of inflammation. By regulating zinc influx into monocytes also directly modulates their adhesion to endothelial cells and arteries. Reclaims manganese from the bile at the apical membrane of hepatocytes, thereby regulating the activity of the manganese-dependent enzymes through the systemic levels of the nutrient. Also participates in manganese reabsorption in the proximal tubule of the kidney. By mediating the extracellular uptake of manganese by cells of the blood-brain barrier, may also play a role in the transport of the micronutrient to the brain. With manganese cellular uptake also participates in mitochondrial proper function. Finally, also probably functions intracellularly, translocating zinc from lysosome to cytosol to indirectly enhance the expression of specific genes during TCR-mediated T cell activation. The chain is Metal cation symporter ZIP8 from Rattus norvegicus (Rat).